The sequence spans 201 residues: Small ribosomal subunit protein uS4c (201 aa).

Residues 16 to 37 (GALPGLTSKRPRSGSDLRNQSR) form a disordered region. Positions 89–152 (MRLDNTLFRL…RSRTLIQNHI (64 aa)) constitute an S4 RNA-binding domain.

Belongs to the universal ribosomal protein uS4 family. In terms of assembly, part of the 30S ribosomal subunit. Contacts protein S5. The interaction surface between S4 and S5 is involved in control of translational fidelity.

It localises to the plastid. The protein localises to the chloroplast. Functionally, one of the primary rRNA binding proteins, it binds directly to 16S rRNA where it nucleates assembly of the body of the 30S subunit. In terms of biological role, with S5 and S12 plays an important role in translational accuracy. This Chloranthus spicatus (Chulantree) protein is Small ribosomal subunit protein uS4c (rps4).